The sequence spans 898 residues: Translation initiation factor IF-2 (898 aa).

Residues 51 to 302 form a disordered region; it reads KEHGDATGSE…RKGRINKPMS (252 aa). Composition is skewed to basic and acidic residues over residues 100 to 164 and 171 to 230; these read SSVE…KRET and RSDE…KETV. Residues 234–245 are compositionally biased toward polar residues; that stretch reads QENTDYHVTTSR. Over residues 263-273 the composition is skewed to basic residues; sequence RRSTKANKRKM. The span at 274 to 286 shows a compositional bias: basic and acidic residues; that stretch reads SSRDDNQERDSRP. The segment covering 287–297 has biased composition (basic residues); that stretch reads RGGKAGRKGRI. The tr-type G domain occupies 397–566; the sequence is SRAPVVTIMG…LLQAEVLELK (170 aa). Residues 406–413 are G1; it reads GHVDHGKT. 406–413 serves as a coordination point for GTP; the sequence is GHVDHGKT. The interval 431 to 435 is G2; sequence GITQH. Positions 452 to 455 are G3; sequence DTPG. GTP contacts are provided by residues 452 to 456 and 506 to 509; these read DTPGH and NKID. A G4 region spans residues 506–509; that stretch reads NKID. The tract at residues 542 to 544 is G5; the sequence is SAK.

The protein belongs to the TRAFAC class translation factor GTPase superfamily. Classic translation factor GTPase family. IF-2 subfamily.

It localises to the cytoplasm. Functionally, one of the essential components for the initiation of protein synthesis. Protects formylmethionyl-tRNA from spontaneous hydrolysis and promotes its binding to the 30S ribosomal subunits. Also involved in the hydrolysis of GTP during the formation of the 70S ribosomal complex. The sequence is that of Translation initiation factor IF-2 from Vibrio cholerae serotype O1 (strain ATCC 39541 / Classical Ogawa 395 / O395).